The chain runs to 304 residues: Phosphoribosylaminoimidazole-succinocarboxamide synthase (304 aa).

It belongs to the SAICAR synthetase family.

It catalyses the reaction 5-amino-1-(5-phospho-D-ribosyl)imidazole-4-carboxylate + L-aspartate + ATP = (2S)-2-[5-amino-1-(5-phospho-beta-D-ribosyl)imidazole-4-carboxamido]succinate + ADP + phosphate + 2 H(+). The protein operates within purine metabolism; IMP biosynthesis via de novo pathway; 5-amino-1-(5-phospho-D-ribosyl)imidazole-4-carboxamide from 5-amino-1-(5-phospho-D-ribosyl)imidazole-4-carboxylate: step 1/2. The polypeptide is Phosphoribosylaminoimidazole-succinocarboxamide synthase (Corynebacterium efficiens (strain DSM 44549 / YS-314 / AJ 12310 / JCM 11189 / NBRC 100395)).